The following is a 54-amino-acid chain: Large ribosomal subunit protein bL33B (54 aa).

This sequence belongs to the bacterial ribosomal protein bL33 family.

The chain is Large ribosomal subunit protein bL33B (rpmG2) from Streptomyces coelicolor (strain ATCC BAA-471 / A3(2) / M145).